The primary structure comprises 261 residues: Carbonic anhydrase 1 (261 aa).

At Ala2 the chain carries N-acetylalanine. In terms of domain architecture, Alpha-carbonic anhydrase spans 4–261; that stretch reads SDWGYDSPNG…LKGRTVRAFF (258 aa). The active-site Proton donor/acceptor is His65. His95, His97, and His120 together coordinate Zn(2+). Residues Thr200 and 200–201 contribute to the substrate site; that span reads TH.

It belongs to the alpha-carbonic anhydrase family. It depends on Zn(2+) as a cofactor.

The protein resides in the cytoplasm. It catalyses the reaction hydrogencarbonate + H(+) = CO2 + H2O. The enzyme catalyses urea = cyanamide + H2O. Its activity is regulated as follows. Inhibited by acetazolamide. Catalyzes the reversible hydration of carbon dioxide. Can hydrate cyanamide to urea. This chain is Carbonic anhydrase 1 (CA1), found in Equus caballus (Horse).